A 332-amino-acid chain; its full sequence is Holliday junction branch migration complex subunit RuvB (332 aa).

The large ATPase domain (RuvB-L) stretch occupies residues 1-181; the sequence is MSRILDNEMM…FGITGHMEYY (181 aa). ATP-binding positions include Leu-20, Arg-21, Gly-62, Lys-65, Thr-66, Thr-67, 128–130, Arg-171, Tyr-181, and Arg-218; that span reads EDF. Residue Thr-66 coordinates Mg(2+). The tract at residues 182 to 252 is small ATPAse domain (RuvB-S); that stretch reads AHADLTEIVE…ITDKALTMLD (71 aa). The interval 255-332 is head domain (RuvB-H); that stretch reads HEGLDYVDQK…EHLGYEYSEK (78 aa). DNA is bound by residues Arg-291, Arg-310, Arg-312, and Arg-315.

Belongs to the RuvB family. In terms of assembly, homohexamer. Forms an RuvA(8)-RuvB(12)-Holliday junction (HJ) complex. HJ DNA is sandwiched between 2 RuvA tetramers; dsDNA enters through RuvA and exits via RuvB. An RuvB hexamer assembles on each DNA strand where it exits the tetramer. Each RuvB hexamer is contacted by two RuvA subunits (via domain III) on 2 adjacent RuvB subunits; this complex drives branch migration. In the full resolvosome a probable DNA-RuvA(4)-RuvB(12)-RuvC(2) complex forms which resolves the HJ.

It is found in the cytoplasm. The catalysed reaction is ATP + H2O = ADP + phosphate + H(+). In terms of biological role, the RuvA-RuvB-RuvC complex processes Holliday junction (HJ) DNA during genetic recombination and DNA repair, while the RuvA-RuvB complex plays an important role in the rescue of blocked DNA replication forks via replication fork reversal (RFR). RuvA specifically binds to HJ cruciform DNA, conferring on it an open structure. The RuvB hexamer acts as an ATP-dependent pump, pulling dsDNA into and through the RuvAB complex. RuvB forms 2 homohexamers on either side of HJ DNA bound by 1 or 2 RuvA tetramers; 4 subunits per hexamer contact DNA at a time. Coordinated motions by a converter formed by DNA-disengaged RuvB subunits stimulates ATP hydrolysis and nucleotide exchange. Immobilization of the converter enables RuvB to convert the ATP-contained energy into a lever motion, pulling 2 nucleotides of DNA out of the RuvA tetramer per ATP hydrolyzed, thus driving DNA branch migration. The RuvB motors rotate together with the DNA substrate, which together with the progressing nucleotide cycle form the mechanistic basis for DNA recombination by continuous HJ branch migration. Branch migration allows RuvC to scan DNA until it finds its consensus sequence, where it cleaves and resolves cruciform DNA. This is Holliday junction branch migration complex subunit RuvB from Streptococcus pneumoniae serotype 4 (strain ATCC BAA-334 / TIGR4).